A 502-amino-acid polypeptide reads, in one-letter code: Cytochrome P450 83A1 (502 aa).

Residues 1–21 (MEDIIIGVVALAAVLLFFLYQ) traverse the membrane as a helical segment. Heme is bound at residue Cys-442.

The protein belongs to the cytochrome P450 family. Requires heme as cofactor.

Its subcellular location is the endoplasmic reticulum membrane. It catalyses the reaction an (E)-omega-(methylsulfanyl)-alkanal oxime + glutathione + reduced [NADPH--hemoprotein reductase] + O2 = an S-[(1E)-1-(hydroxyimino)-omega-(methylsulfanyl)alkyl]-L-glutathione + oxidized [NADPH--hemoprotein reductase] + 2 H2O + H(+). In terms of biological role, involved in the metabolism of aliphatic and aromatic oximes. Involved in the biosynthesis of both short-chain and long-chain aliphatic glucosinolates. The polypeptide is Cytochrome P450 83A1 (CYP83A1) (Arabidopsis thaliana (Mouse-ear cress)).